The chain runs to 538 residues: Putative amidase kk1C (538 aa).

The segment at 1–32 is disordered; the sequence is MTEPTWKTVASEKQQQRESKIPSEWQIPKSSH. Residues Lys134 and Ser209 each act as charge relay system in the active site. Catalysis depends on Ser233, which acts as the Acyl-ester intermediate.

Belongs to the amidase family.

The enzyme catalyses a monocarboxylic acid amide + H2O = a monocarboxylate + NH4(+). It participates in secondary metabolite biosynthesis. Its function is as follows. Putative amidase; part of the gene cluster that mediates the biosynthesis of KK-1, a novel cyclic depsipeptide with 10 residues which is a promising active compound with high activity against many plant pathogens, especially Botrytis cinerea. The role of kk1C in KK-1 biosynthesis has still to be determined. The nonribosomal peptide synthetase (NRPS) kk1B catalyzes the elongation and cyclization of the decapeptide chain composed of 1 D-lactic acid residue (D-Lac), 1 pipecolic acid residue (Pip), 1 aspartic acid residue (Asp), 1 isoleucine residue (Ile), 1 glycine residue (Gly), 1 tyrosine residue (Tyr) and 4 valine residues (Val). The Asp, Ile and 3 Val residues are N-methylated by the 5 methyltransferase domains from the NRPS (found in modules 3, 5, 6, 7 and 9), whereas the Tyr residue is O-methylated by the cluster encoded O-methyltransferase kk1A. The thioesterase kk1J is likely to be involved in the corrective mechanism of peptide chain synthesis. The D-lactate dehydrogenase kk1H is involved in the synthesis of D-lactic acid from pyruvic acid, which is recognized by the A domain of the first kk1B module. The pyrroline-5-carboxylate reductase kk1I is involved in the synthesis of the L-pipecolic acid residue of KK-1 from delta-1-pyrroline-5-carboxylate (P5C), a metabolic intermediate of lysine. It is still unclear how kk1C and kk1D are involved in the production of KK-1. The protein is Putative amidase kk1C of Curvularia clavata.